Consider the following 215-residue polypeptide: Glycerol-3-phosphate acyltransferase (215 aa).

The next 6 membrane-spanning stretches (helical) occupy residues 3 to 23 (LILL…LWIG), 42 to 61 (TNTF…LIDI), 68 to 90 (TLLP…FAVL), 110 to 130 (AGVL…VFVL), 134 to 154 (LFSM…ISVL), and 162 to 182 (LLPS…AIII).

This sequence belongs to the PlsY family. In terms of assembly, probably interacts with PlsX.

The protein resides in the cell membrane. The enzyme catalyses an acyl phosphate + sn-glycerol 3-phosphate = a 1-acyl-sn-glycero-3-phosphate + phosphate. It participates in lipid metabolism; phospholipid metabolism. In terms of biological role, catalyzes the transfer of an acyl group from acyl-phosphate (acyl-PO(4)) to glycerol-3-phosphate (G3P) to form lysophosphatidic acid (LPA). This enzyme utilizes acyl-phosphate as fatty acyl donor, but not acyl-CoA or acyl-ACP. The protein is Glycerol-3-phosphate acyltransferase of Streptococcus equi subsp. equi (strain 4047).